Consider the following 388-residue polypeptide: tRNA (guanine(26)-N(2))-dimethyltransferase (388 aa).

The region spanning 7–381 (KTVEEGLTKI…APLKKIKEII (375 aa)) is the Trm1 methyltransferase domain. The S-adenosyl-L-methionine site is built by R40, R70, D88, D115, and A116. Residues C248, C251, C268, and C271 each contribute to the Zn(2+) site.

Belongs to the class I-like SAM-binding methyltransferase superfamily. Trm1 family.

It catalyses the reaction guanosine(26) in tRNA + 2 S-adenosyl-L-methionine = N(2)-dimethylguanosine(26) in tRNA + 2 S-adenosyl-L-homocysteine + 2 H(+). Dimethylates a single guanine residue at position 26 of a number of tRNAs using S-adenosyl-L-methionine as donor of the methyl groups. In Methanobrevibacter smithii (strain ATCC 35061 / DSM 861 / OCM 144 / PS), this protein is tRNA (guanine(26)-N(2))-dimethyltransferase.